The sequence spans 74 residues: Amphipathic peptide CT1 (74 aa).

A signal peptide spans 1-23 (MKTQIVILFISMIMLQMFVQIEG). Valine amide is present on valine 37. The propeptide occupies 41 to 74 (GLRNLDDLDDLDLDHLFDSDVSDADLRLLKQMFR).

It belongs to the non-disulfide-bridged peptide (NDBP) superfamily. Short antimicrobial peptide (group 4) family. As to expression, expressed by the venom gland.

Its subcellular location is the secreted. It localises to the target cell membrane. Its function is as follows. Antimicrobial peptide that is rapidly bactericidal against Gram-positive bacteria (MIC=12.5 ug/ml against S.aureus, and MIC=100 ug/ml against M.luteus). Is also active against clinical antibiotics-resistant bacterial strains. In Scorpiops tibetanus (Scorpion), this protein is Amphipathic peptide CT1.